A 174-amino-acid chain; its full sequence is Large ribosomal subunit protein uL10 (174 aa).

The protein belongs to the universal ribosomal protein uL10 family. In terms of assembly, part of the ribosomal stalk of the 50S ribosomal subunit. The N-terminus interacts with L11 and the large rRNA to form the base of the stalk. The C-terminus forms an elongated spine to which L12 dimers bind in a sequential fashion forming a multimeric L10(L12)X complex.

In terms of biological role, forms part of the ribosomal stalk, playing a central role in the interaction of the ribosome with GTP-bound translation factors. The polypeptide is Large ribosomal subunit protein uL10 (Syntrophus aciditrophicus (strain SB)).